Reading from the N-terminus, the 488-residue chain is MSFNHHTIEELHELLVAKDISAVELTKATLEDIKAREEAVGSFITIACEAALKQAAALDAKGIDPDNVMSGIPLAVKDNISTKGILTTAASKMLYNYEPIFDATAVANAYDKDMIVIGKTNMDEFAMGGSTETSYFKKTKNAWDHSRVPGGSSGGSATAVASGQVRLSLGSDTGGSIRQPAAFNGVVGLKPTYGAVSRYGLIAFGSSLDQIGPFAPTVRENAQLLSVIAGSDRKDSTSAPVQIADYTSKIGQDIKGMKIALPKEYLGEGIDPKIKETILAAAQHFEKLGAIIEEVSLPHSKYGVAVYYIIASSEASSNLQRFDGIRYGFRAADAKSLEDIYVKTRSQGFGDEVKRRIMLGTFSLSSGYYDAYFKKAGQVRTLIIQDFEKVFADYDLILGPTAPTAAFELDTLNHDPVAMYLADILTIPVNLAGLPAISIPAGFADGLPVGLQLIGPKYSEEVIYQVAAAFEATTDYHKQQPMIFGGDR.

Residues K77 and S152 each act as charge relay system in the active site. S176 functions as the Acyl-ester intermediate in the catalytic mechanism.

This sequence belongs to the amidase family. GatA subfamily. As to quaternary structure, heterotrimer of A, B and C subunits.

It catalyses the reaction L-glutamyl-tRNA(Gln) + L-glutamine + ATP + H2O = L-glutaminyl-tRNA(Gln) + L-glutamate + ADP + phosphate + H(+). Functionally, allows the formation of correctly charged Gln-tRNA(Gln) through the transamidation of misacylated Glu-tRNA(Gln) in organisms which lack glutaminyl-tRNA synthetase. The reaction takes place in the presence of glutamine and ATP through an activated gamma-phospho-Glu-tRNA(Gln). The chain is Glutamyl-tRNA(Gln) amidotransferase subunit A from Streptococcus equi subsp. zooepidemicus (strain H70).